The following is a 177-amino-acid chain: Large ribosomal subunit protein uL6 (177 aa).

The protein belongs to the universal ribosomal protein uL6 family. In terms of assembly, part of the 50S ribosomal subunit.

Its function is as follows. This protein binds to the 23S rRNA, and is important in its secondary structure. It is located near the subunit interface in the base of the L7/L12 stalk, and near the tRNA binding site of the peptidyltransferase center. The polypeptide is Large ribosomal subunit protein uL6 (Rhizobium etli (strain ATCC 51251 / DSM 11541 / JCM 21823 / NBRC 15573 / CFN 42)).